We begin with the raw amino-acid sequence, 257 residues long: Histidine/lysine/arginine/ornithine transport ATP-binding protein HisP (257 aa).

Positions 6-252 (LNVIDLHKRY…PQSPRLQRFL (247 aa)) constitute an ABC transporter domain. Residues serine 40, glycine 41, glycine 43, lysine 44, serine 45, and threonine 46 each coordinate ATP.

Belongs to the ABC transporter superfamily. As to quaternary structure, the HisPMQJ complex is composed of two ATP-binding proteins (HisP), two transmembrane proteins (HisM and HisQ) and a solute-binding protein (HisJ). The HisPMQ-ArgT complex is composed of two ATP-binding proteins (HisP), two transmembrane proteins (HisM and HisQ) and a solute-binding protein (ArgT).

The protein resides in the cell inner membrane. The enzyme catalyses a polar amino acid(out) + ATP + H2O = a polar amino acid(in) + ADP + phosphate + H(+). It catalyses the reaction L-histidine(out) + ATP + H2O = L-histidine(in) + ADP + phosphate + H(+). The catalysed reaction is L-lysine(out) + ATP + H2O = L-lysine(in) + ADP + phosphate + H(+). It carries out the reaction L-arginine(out) + ATP + H2O = L-arginine(in) + ADP + phosphate + H(+). The enzyme catalyses L-ornithine(out) + ATP + H2O = L-ornithine(in) + ADP + phosphate + H(+). In terms of biological role, part of the ABC transporter complex HisPMQJ involved in histidine transport. Is also part of the ABC transporter complex HisPMQ-ArgT involved in lysine/arginine/ornithine transport. Shows ATPase activity. Responsible for energy coupling to the transport system. In Escherichia coli (strain K12), this protein is Histidine/lysine/arginine/ornithine transport ATP-binding protein HisP.